The primary structure comprises 268 residues: Cell division cycle-associated protein 3 (268 aa).

2 disordered regions span residues 1-232 (MGSA…SELK) and 247-268 (GRAW…LVES). A phosphoserine mark is found at Ser-29 and Ser-31. The residue at position 37 (Thr-37) is a Phosphothreonine. Phosphoserine occurs at positions 44, 64, and 68. Basic and acidic residues predominate over residues 56–66 (EGLKHAQDSDP). The residue at position 76 (Thr-76) is a Phosphothreonine. 2 positions are modified to phosphoserine: Ser-87 and Ser-94. The tract at residues 91 to 120 (KQLSEVFETEDSKSNLPPEPVLPPEAPLSS) is F-box-like. Positions 107–116 (PPEPVLPPEA) are enriched in pro residues. The span at 117–126 (PLSSELDLPL) shows a compositional bias: low complexity. Composition is skewed to polar residues over residues 128 to 149 (TQLS…SKQV), 158 to 169 (PTETPVASQSSD), and 178 to 194 (PRSS…NSSK). A Phosphoserine modification is found at Ser-199. Thr-202 is modified (phosphothreonine). Positions 205-215 (QDDNSPGTLTL) are enriched in polar residues. Residue Ser-209 is modified to Phosphoserine. Phosphothreonine is present on Thr-212. A KEN box motif is present at residues 258–260 (KEN).

In terms of assembly, interacts with SKP1. Part of a SCF (SKP1-cullin-F-box) protein ligase complex. Ubiquitinated and degraded by the APC/C-Cdh1 complex.

It is found in the cytoplasm. It localises to the cytosol. It functions in the pathway protein modification; protein ubiquitination. Its function is as follows. F-box-like protein which is required for entry into mitosis. Acts by participating in E3 ligase complexes that mediate the ubiquitination and degradation of WEE1 kinase at G2/M phase. The chain is Cell division cycle-associated protein 3 (CDCA3) from Homo sapiens (Human).